The sequence spans 415 residues: Isocitrate dehydrogenase [NADP] 1 (415 aa).

Residue Thr-104 coordinates NADP(+). Ser-113, Asn-115, Arg-119, Arg-129, and Arg-153 together coordinate D-threo-isocitrate. Mg(2+) is bound at residue Asp-307. Residues 339–345 (HGTAPKY), Asn-352, Tyr-390, and Arg-394 contribute to the NADP(+) site.

The protein belongs to the isocitrate and isopropylmalate dehydrogenases family. Homodimer. Mg(2+) serves as cofactor. The cofactor is Mn(2+).

The catalysed reaction is D-threo-isocitrate + NADP(+) = 2-oxoglutarate + CO2 + NADPH. Catalyzes the oxidative decarboxylation of isocitrate to 2-oxoglutarate and carbon dioxide with the concomitant reduction of NADP(+). In Colwellia maris, this protein is Isocitrate dehydrogenase [NADP] 1.